A 393-amino-acid polypeptide reads, in one-letter code: Xyloside xylosyltransferase 1 (393 aa).

Over 1-23 (MGLLRGGLPCARAMARLGAVRSH) the chain is Cytoplasmic. Residues 24 to 44 (YCALLLAAALAVCAFYYLGSG) form a helical; Signal-anchor for type II membrane protein membrane-spanning segment. Residues 45–393 (RETFSSATKR…GNCNTPIPED (349 aa)) are Lumenal-facing. 104–106 (MFT) serves as a coordination point for UDP-alpha-D-xylose. Aspartate 226 is a Mn(2+) binding site. Leucine 227 provides a ligand contact to UDP-alpha-D-xylose. A Mn(2+)-binding site is contributed by aspartate 228. The segment at 263–266 (HTFW) is interaction with target proteins. UDP-alpha-D-xylose-binding residues include serine 290, leucine 328, and glutamine 331. A glycoprotein-binding residues include glutamine 331 and tryptophan 360. Cystine bridges form between cysteine 350/cysteine 375 and cysteine 357/cysteine 386. Histidine 383 contacts Mn(2+). Asparagine 385 is a binding site for a glycoprotein.

This sequence belongs to the glycosyltransferase 8 family. In terms of assembly, homodimer. Dimer formation may be essential for the retention in endoplasmic reticulum. The cofactor is Mg(2+). Mn(2+) is required as a cofactor.

It is found in the endoplasmic reticulum membrane. It carries out the reaction 3-O-[alpha-D-xylosyl-(1-&gt;3)-beta-D-glucosyl]-L-seryl-[EGF-like domain protein] + UDP-alpha-D-xylose = 3-O-[alpha-D-xylosyl-(1-&gt;3)-alpha-D-xylosyl-(1-&gt;3)-beta-D-glucosyl]-L-seryl-[EGF-like domain protein] + UDP + H(+). Alpha-1,3-xylosyltransferase, which elongates the O-linked xylose-glucose disaccharide attached to EGF-like repeats in the extracellular domain of target proteins by catalyzing the addition of the second xylose. Known targets include Notch proteins and coagulation factors, such as F9. The chain is Xyloside xylosyltransferase 1 (XXYLT1) from Homo sapiens (Human).